The following is a 104-amino-acid chain: Co-chaperonin GroES 3 (104 aa).

Belongs to the GroES chaperonin family. Heptamer of 7 subunits arranged in a ring. Interacts with the chaperonin GroEL.

The protein resides in the cytoplasm. Functionally, together with the chaperonin GroEL, plays an essential role in assisting protein folding. The GroEL-GroES system forms a nano-cage that allows encapsulation of the non-native substrate proteins and provides a physical environment optimized to promote and accelerate protein folding. GroES binds to the apical surface of the GroEL ring, thereby capping the opening of the GroEL channel. The protein is Co-chaperonin GroES 3 of Bradyrhizobium diazoefficiens (strain JCM 10833 / BCRC 13528 / IAM 13628 / NBRC 14792 / USDA 110).